A 646-amino-acid polypeptide reads, in one-letter code: Lipoteichoic acid synthase (646 aa).

Over 1 to 7 (MSSQKKK) the chain is Cytoplasmic. The chain crosses the membrane as a helical span at residues 8 to 28 (ISLFAFFLLTVITITLKTYFS). The Extracellular portion of the chain corresponds to 29 to 43 (YYVDFSLGVKGLVQN). Residues 44 to 64 (LILLMNPYSLVALVLSVFLFF) traverse the membrane as a helical segment. At 65 to 68 (KGKK) the chain is on the cytoplasmic side. A helical transmembrane segment spans residues 69–89 (AFWFMFIGGFLLTFLLYANVV). The Extracellular portion of the chain corresponds to 90–119 (YFRFFSDFLTFSTLNQVGNVESMGGAVSAS). Residues 120–140 (FKWYDFVYFIDTLVYLFILIF) form a helical membrane-spanning segment. Residues 141–153 (KTKWLDTKAFSKK) are Cytoplasmic-facing. The chain crosses the membrane as a helical span at residues 154-174 (FVPVVMAASVALFFLNLAFAE). Residues 175-646 (TDRPELLTRT…ETGPKANSKK (472 aa)) are Extracellular-facing. Residues Glu-255 and Thr-300 each coordinate Mn(2+). Thr-300 is an active-site residue. Position 416 (His-416) interacts with substrate. 2 residues coordinate Mn(2+): Asp-475 and His-476. Over residues 623–638 (NPDFKKVNPSKYKYET) the composition is skewed to basic and acidic residues. The disordered stretch occupies residues 623-646 (NPDFKKVNPSKYKYETGPKANSKK).

The protein belongs to the LTA synthase family. In terms of processing, proteolytically cleaved.

The protein resides in the cell membrane. The protein localises to the secreted. It participates in cell wall biogenesis; lipoteichoic acid biosynthesis. In terms of biological role, catalyzes the polymerization of lipoteichoic acid (LTA) polyglycerol phosphate, a reaction that presumably uses phosphatidylglycerol (PG) as substrate. Is required for staphylococcal growth and cell division process. The sequence is that of Lipoteichoic acid synthase (ltaS) from Staphylococcus aureus (strain bovine RF122 / ET3-1).